A 607-amino-acid polypeptide reads, in one-letter code: UvrABC system protein C (607 aa).

The GIY-YIG domain maps to 16-94 (GRPGVYRMFD…IKEWRPPYNI (79 aa)). The UVR domain maps to 203–238 (QQLGNELNAEMEKAAMALDFEKAAELRDQIALLRRV).

The protein belongs to the UvrC family. As to quaternary structure, interacts with UvrB in an incision complex.

The protein localises to the cytoplasm. Functionally, the UvrABC repair system catalyzes the recognition and processing of DNA lesions. UvrC both incises the 5' and 3' sides of the lesion. The N-terminal half is responsible for the 3' incision and the C-terminal half is responsible for the 5' incision. This is UvrABC system protein C from Pseudomonas putida (strain ATCC 700007 / DSM 6899 / JCM 31910 / BCRC 17059 / LMG 24140 / F1).